A 430-amino-acid chain; its full sequence is Ribosomal protein uS12 methylthiotransferase RimO (430 aa).

The MTTase N-terminal domain occupies 2–119 (ISVYSISLGC…WPAMLAHALK (118 aa)). 6 residues coordinate [4Fe-4S] cluster: C11, C46, C81, C145, C149, and C152. Residues 131–361 (STGPSYAWLK…MEVQAEISEE (231 aa)) form the Radical SAM core domain. Positions 364-430 (AVHEGTRQQV…TRTYDLVALA (67 aa)) constitute a TRAM domain.

Belongs to the methylthiotransferase family. RimO subfamily. Requires [4Fe-4S] cluster as cofactor.

It is found in the cytoplasm. The catalysed reaction is L-aspartate(89)-[ribosomal protein uS12]-hydrogen + (sulfur carrier)-SH + AH2 + 2 S-adenosyl-L-methionine = 3-methylsulfanyl-L-aspartate(89)-[ribosomal protein uS12]-hydrogen + (sulfur carrier)-H + 5'-deoxyadenosine + L-methionine + A + S-adenosyl-L-homocysteine + 2 H(+). Its function is as follows. Catalyzes the methylthiolation of an aspartic acid residue of ribosomal protein uS12. The chain is Ribosomal protein uS12 methylthiotransferase RimO from Nitratidesulfovibrio vulgaris (strain ATCC 29579 / DSM 644 / CCUG 34227 / NCIMB 8303 / VKM B-1760 / Hildenborough) (Desulfovibrio vulgaris).